The chain runs to 104 residues: Large ribosomal subunit protein bL21c (104 aa).

This sequence belongs to the bacterial ribosomal protein bL21 family. In terms of assembly, part of the 50S ribosomal subunit.

Its subcellular location is the plastid. The protein localises to the chloroplast. In terms of biological role, this protein binds to 23S rRNA. This chain is Large ribosomal subunit protein bL21c, found in Guillardia theta (Cryptophyte).